We begin with the raw amino-acid sequence, 283 residues long: Diaminopimelate epimerase (283 aa).

Residues asparagine 13 and asparagine 65 each coordinate substrate. Catalysis depends on cysteine 74, which acts as the Proton donor. Residues 75–76 (GN), asparagine 196, and 214–215 (ER) each bind substrate. Cysteine 223 (proton acceptor) is an active-site residue. 224–225 (GT) is a binding site for substrate.

This sequence belongs to the diaminopimelate epimerase family. In terms of assembly, homodimer.

It localises to the cytoplasm. The catalysed reaction is (2S,6S)-2,6-diaminopimelate = meso-2,6-diaminopimelate. It participates in amino-acid biosynthesis; L-lysine biosynthesis via DAP pathway; DL-2,6-diaminopimelate from LL-2,6-diaminopimelate: step 1/1. Functionally, catalyzes the stereoinversion of LL-2,6-diaminopimelate (L,L-DAP) to meso-diaminopimelate (meso-DAP), a precursor of L-lysine and an essential component of the bacterial peptidoglycan. This Alkaliphilus metalliredigens (strain QYMF) protein is Diaminopimelate epimerase.